We begin with the raw amino-acid sequence, 1400 residues long: DNA-directed RNA polymerase subunit beta' (1400 aa).

Zn(2+) is bound by residues Cys-71, Cys-73, Cys-86, and Cys-89. The Mg(2+) site is built by Asp-462, Asp-464, and Asp-466. Zn(2+) is bound by residues Cys-811, Cys-885, Cys-892, and Cys-895.

This sequence belongs to the RNA polymerase beta' chain family. In terms of assembly, the RNAP catalytic core consists of 2 alpha, 1 beta, 1 beta' and 1 omega subunit. When a sigma factor is associated with the core the holoenzyme is formed, which can initiate transcription. Mg(2+) serves as cofactor. The cofactor is Zn(2+).

It carries out the reaction RNA(n) + a ribonucleoside 5'-triphosphate = RNA(n+1) + diphosphate. In terms of biological role, DNA-dependent RNA polymerase catalyzes the transcription of DNA into RNA using the four ribonucleoside triphosphates as substrates. This Brucella suis (strain ATCC 23445 / NCTC 10510) protein is DNA-directed RNA polymerase subunit beta'.